We begin with the raw amino-acid sequence, 317 residues long: tRNA(Ile)-lysidine synthase (317 aa).

Serine 30 to serine 35 is a binding site for ATP.

It belongs to the tRNA(Ile)-lysidine synthase family.

It is found in the cytoplasm. The catalysed reaction is cytidine(34) in tRNA(Ile2) + L-lysine + ATP = lysidine(34) in tRNA(Ile2) + AMP + diphosphate + H(+). Its function is as follows. Ligates lysine onto the cytidine present at position 34 of the AUA codon-specific tRNA(Ile) that contains the anticodon CAU, in an ATP-dependent manner. Cytidine is converted to lysidine, thus changing the amino acid specificity of the tRNA from methionine to isoleucine. This chain is tRNA(Ile)-lysidine synthase, found in Chlamydia abortus (strain DSM 27085 / S26/3) (Chlamydophila abortus).